A 545-amino-acid polypeptide reads, in one-letter code: Chaperonin GroEL (545 aa).

ATP-binding positions include 30–33, Lys-51, 87–91, Gly-413, 477–479, and Asp-493; these read TLGP, DGTTT, and NAA.

This sequence belongs to the chaperonin (HSP60) family. Forms a cylinder of 14 subunits composed of two heptameric rings stacked back-to-back. Interacts with the co-chaperonin GroES.

The protein resides in the cytoplasm. The enzyme catalyses ATP + H2O + a folded polypeptide = ADP + phosphate + an unfolded polypeptide.. Functionally, together with its co-chaperonin GroES, plays an essential role in assisting protein folding. The GroEL-GroES system forms a nano-cage that allows encapsulation of the non-native substrate proteins and provides a physical environment optimized to promote and accelerate protein folding. The polypeptide is Chaperonin GroEL (Pseudomonas putida (Arthrobacter siderocapsulatus)).